The following is a 399-amino-acid chain: Succinate--CoA ligase [ADP-forming] subunit beta (399 aa).

Residues Lys9–Glu254 form the ATP-grasp domain. ATP is bound by residues Lys46, Gly53 to Gly55, Ala112, and Glu117. Positions 209 and 223 each coordinate Mg(2+). Residues Asn274 and Gly331 to Met333 each bind substrate.

This sequence belongs to the succinate/malate CoA ligase beta subunit family. As to quaternary structure, heterotetramer of two alpha and two beta subunits. Mg(2+) serves as cofactor.

It carries out the reaction succinate + ATP + CoA = succinyl-CoA + ADP + phosphate. The catalysed reaction is GTP + succinate + CoA = succinyl-CoA + GDP + phosphate. The protein operates within carbohydrate metabolism; tricarboxylic acid cycle; succinate from succinyl-CoA (ligase route): step 1/1. Its function is as follows. Succinyl-CoA synthetase functions in the citric acid cycle (TCA), coupling the hydrolysis of succinyl-CoA to the synthesis of either ATP or GTP and thus represents the only step of substrate-level phosphorylation in the TCA. The beta subunit provides nucleotide specificity of the enzyme and binds the substrate succinate, while the binding sites for coenzyme A and phosphate are found in the alpha subunit. This chain is Succinate--CoA ligase [ADP-forming] subunit beta, found in Rhizorhabdus wittichii (strain DSM 6014 / CCUG 31198 / JCM 15750 / NBRC 105917 / EY 4224 / RW1) (Sphingomonas wittichii).